Consider the following 495-residue polypeptide: Probable polyamine transporter At1g31830 (495 aa).

Transmembrane regions (helical) follow at residues 49–69, 79–99, 112–132, 156–176, 186–206, 230–250, 267–287, 357–377, 380–400, 417–437, and 442–462; these read VSMLPLVFLIFYEVSGGPFGV, LLALLGFVIFPFIWSIPEALI, GYVVWVSSALGPFWGFQQGWM, VPALGSGLPRVASILVLTILL, IVGWVAVLMGVFSILPFAVMG, LYLNTLFWNLNYWDSISTLAG, VILVACSYIFPLLAGIGAIPL, TPLLGILFSASGVVLLSWLSF, IVAAENLLYCVGMILEFIAFV, IGTTGSILMCIPPTILICAVV, and LKVAAVSIVMMIIGFLIHPLL.

Belongs to the amino acid-polyamine-organocation (APC) superfamily. Polyamine:cation symporter (PHS) (TC 2.A.3.12) family.

The protein localises to the cell membrane. Probable cell membrane polyamine/proton symporter involved in the polyamine uptake in cells. This chain is Probable polyamine transporter At1g31830, found in Arabidopsis thaliana (Mouse-ear cress).